Consider the following 910-residue polypeptide: Coatomer subunit beta'-2 (910 aa).

9 WD repeats span residues 13–52 (QRSE…MVKS), 55–94 (VTEL…KVKV), 97–136 (AHTD…MCTQ), 140–180 (GHSH…PNFT), 183–224 (GHSK…CVQT), 227–266 (GHAH…LENT), 269–309 (YGLE…ASMD), 351–393 (TCDL…GSAL), and 461–501 (RIDV…SHLD). Positions 882–910 (ADGSTDGAVLVNGNDTEEQWGTNNEESSA) are disordered. Positions 900–910 (QWGTNNEESSA) are enriched in polar residues.

The protein belongs to the WD repeat COPB2 family. As to quaternary structure, oligomeric complex that consists of at least the alpha, beta, beta', gamma, delta, epsilon and zeta subunits.

It localises to the cytoplasm. The protein localises to the golgi apparatus membrane. Its subcellular location is the cytoplasmic vesicle. It is found in the COPI-coated vesicle membrane. In terms of biological role, the coatomer is a cytosolic protein complex that binds to dilysine motifs and reversibly associates with Golgi non-clathrin-coated vesicles, which further mediate biosynthetic protein transport from the ER, via the Golgi up to the trans Golgi network. Coatomer complex is required for budding from Golgi membranes, and is essential for the retrograde Golgi-to-ER transport of dilysine-tagged proteins. This is Coatomer subunit beta'-2 from Oryza sativa subsp. japonica (Rice).